Reading from the N-terminus, the 406-residue chain is Arginine biosynthesis bifunctional protein ArgJ (406 aa).

Residues threonine 152, lysine 179, threonine 190, glutamate 277, asparagine 401, and serine 406 each coordinate substrate. The active-site Nucleophile is threonine 190.

This sequence belongs to the ArgJ family. As to quaternary structure, heterotetramer of two alpha and two beta chains.

It localises to the cytoplasm. It catalyses the reaction N(2)-acetyl-L-ornithine + L-glutamate = N-acetyl-L-glutamate + L-ornithine. The enzyme catalyses L-glutamate + acetyl-CoA = N-acetyl-L-glutamate + CoA + H(+). Its pathway is amino-acid biosynthesis; L-arginine biosynthesis; L-ornithine and N-acetyl-L-glutamate from L-glutamate and N(2)-acetyl-L-ornithine (cyclic): step 1/1. It functions in the pathway amino-acid biosynthesis; L-arginine biosynthesis; N(2)-acetyl-L-ornithine from L-glutamate: step 1/4. Functionally, catalyzes two activities which are involved in the cyclic version of arginine biosynthesis: the synthesis of N-acetylglutamate from glutamate and acetyl-CoA as the acetyl donor, and of ornithine by transacetylation between N(2)-acetylornithine and glutamate. The protein is Arginine biosynthesis bifunctional protein ArgJ of Neisseria meningitidis serogroup A / serotype 4A (strain DSM 15465 / Z2491).